The following is a 276-amino-acid chain: 3-methyl-2-oxobutanoate hydroxymethyltransferase (276 aa).

Mg(2+)-binding residues include Asp50 and Asp89. 3-methyl-2-oxobutanoate is bound by residues 50 to 51 (DS), Asp89, and Lys119. Glu121 contributes to the Mg(2+) binding site. The active-site Proton acceptor is Glu188.

Belongs to the PanB family. Homodecamer; pentamer of dimers. Mg(2+) serves as cofactor.

Its subcellular location is the cytoplasm. The catalysed reaction is 3-methyl-2-oxobutanoate + (6R)-5,10-methylene-5,6,7,8-tetrahydrofolate + H2O = 2-dehydropantoate + (6S)-5,6,7,8-tetrahydrofolate. Its pathway is cofactor biosynthesis; (R)-pantothenate biosynthesis; (R)-pantoate from 3-methyl-2-oxobutanoate: step 1/2. In terms of biological role, catalyzes the reversible reaction in which hydroxymethyl group from 5,10-methylenetetrahydrofolate is transferred onto alpha-ketoisovalerate to form ketopantoate. The sequence is that of 3-methyl-2-oxobutanoate hydroxymethyltransferase from Paracoccus denitrificans (strain Pd 1222).